Consider the following 675-residue polypeptide: DNA gyrase subunit B (675 aa).

The 115-residue stretch at 453 to 567 (SELYVVEGDS…NGHVFLAQPP (115 aa)) folds into the Toprim domain. Residues glutamate 459, aspartate 532, and aspartate 534 each coordinate Mg(2+).

Belongs to the type II topoisomerase GyrB family. In terms of assembly, heterotetramer, composed of two GyrA and two GyrB chains. In the heterotetramer, GyrA contains the active site tyrosine that forms a transient covalent intermediate with DNA, while GyrB binds cofactors and catalyzes ATP hydrolysis. Requires Mg(2+) as cofactor. Mn(2+) is required as a cofactor. Ca(2+) serves as cofactor.

The protein resides in the cytoplasm. The catalysed reaction is ATP-dependent breakage, passage and rejoining of double-stranded DNA.. Its function is as follows. A type II topoisomerase that negatively supercoils closed circular double-stranded (ds) DNA in an ATP-dependent manner to modulate DNA topology and maintain chromosomes in an underwound state. Negative supercoiling favors strand separation, and DNA replication, transcription, recombination and repair, all of which involve strand separation. Also able to catalyze the interconversion of other topological isomers of dsDNA rings, including catenanes and knotted rings. Type II topoisomerases break and join 2 DNA strands simultaneously in an ATP-dependent manner. This Mycobacterium tuberculosis (strain ATCC 25177 / H37Ra) protein is DNA gyrase subunit B.